The chain runs to 207 residues: NAD(P)H-quinone oxidoreductase subunit K, chloroplastic (207 aa).

[4Fe-4S] cluster-binding residues include cysteine 47, cysteine 48, cysteine 112, and cysteine 143.

It belongs to the complex I 20 kDa subunit family. In terms of assembly, NDH is composed of at least 16 different subunits, 5 of which are encoded in the nucleus. Requires [4Fe-4S] cluster as cofactor.

Its subcellular location is the plastid. It is found in the chloroplast thylakoid membrane. The enzyme catalyses a plastoquinone + NADH + (n+1) H(+)(in) = a plastoquinol + NAD(+) + n H(+)(out). It catalyses the reaction a plastoquinone + NADPH + (n+1) H(+)(in) = a plastoquinol + NADP(+) + n H(+)(out). In terms of biological role, NDH shuttles electrons from NAD(P)H:plastoquinone, via FMN and iron-sulfur (Fe-S) centers, to quinones in the photosynthetic chain and possibly in a chloroplast respiratory chain. The immediate electron acceptor for the enzyme in this species is believed to be plastoquinone. Couples the redox reaction to proton translocation, and thus conserves the redox energy in a proton gradient. The protein is NAD(P)H-quinone oxidoreductase subunit K, chloroplastic of Psilotum nudum (Whisk fern).